Consider the following 341-residue polypeptide: MTKDILILAVETSCDETSVSVIKNGRDILSNTVLSQIESHKRFGGVVPEVASRHHVEGITTTINEALVDADVSMEDIDAIAVTEGPGLIGALLIGVNAAKALAFAYDKPLIPVHHIAGHIYANHIEEPLTFPLIALIVSGGHTELVYMKDHLTFEVIGETRDDAVGEAYDKVARTIGLNYPGGPQVDRLAAEGEDTYSFPRVWLDKDSYDFSFSGLKSAVINQLHNQRQKNIPIIEANVATSFQNSVVEVLTFKAIQACKEYGVQRLIVAGGVASNKGLRQSLADQCKVNDIQLTIPSPKLCTDNAAMIGVAGHYLYQQGRFADLALNGHSNIDLEEYSAE.

Fe cation is bound by residues H115 and H119. Residues 137–141 (IVSGG), D170, G183, D187, and N276 contribute to the substrate site. D304 provides a ligand contact to Fe cation.

Belongs to the KAE1 / TsaD family. Fe(2+) serves as cofactor.

The protein resides in the cytoplasm. The catalysed reaction is L-threonylcarbamoyladenylate + adenosine(37) in tRNA = N(6)-L-threonylcarbamoyladenosine(37) in tRNA + AMP + H(+). Its function is as follows. Required for the formation of a threonylcarbamoyl group on adenosine at position 37 (t(6)A37) in tRNAs that read codons beginning with adenine. Is involved in the transfer of the threonylcarbamoyl moiety of threonylcarbamoyl-AMP (TC-AMP) to the N6 group of A37, together with TsaE and TsaB. TsaD likely plays a direct catalytic role in this reaction. The protein is tRNA N6-adenosine threonylcarbamoyltransferase of Staphylococcus aureus (strain MRSA252).